Reading from the N-terminus, the 212-residue chain is Pyridoxine/pyridoxamine 5'-phosphate oxidase (212 aa).

FMN contacts are provided by residues 57–62, 72–73, R78, K79, and Q101; these read RMVLLK and YT. K62 provides a ligand contact to substrate. Y119, R123, and S127 together coordinate substrate. Residues 136 to 137 and W181 contribute to the FMN site; that span reads QS. A substrate-binding site is contributed by 187–189; the sequence is RLH. R191 lines the FMN pocket.

Belongs to the pyridoxamine 5'-phosphate oxidase family. Homodimer. FMN serves as cofactor.

It carries out the reaction pyridoxamine 5'-phosphate + O2 + H2O = pyridoxal 5'-phosphate + H2O2 + NH4(+). It catalyses the reaction pyridoxine 5'-phosphate + O2 = pyridoxal 5'-phosphate + H2O2. It participates in cofactor metabolism; pyridoxal 5'-phosphate salvage; pyridoxal 5'-phosphate from pyridoxamine 5'-phosphate: step 1/1. The protein operates within cofactor metabolism; pyridoxal 5'-phosphate salvage; pyridoxal 5'-phosphate from pyridoxine 5'-phosphate: step 1/1. Its function is as follows. Catalyzes the oxidation of either pyridoxine 5'-phosphate (PNP) or pyridoxamine 5'-phosphate (PMP) into pyridoxal 5'-phosphate (PLP). The chain is Pyridoxine/pyridoxamine 5'-phosphate oxidase from Erythrobacter litoralis (strain HTCC2594).